A 117-amino-acid chain; its full sequence is Anti-sigma F factor antagonist (117 aa).

The STAS domain maps to 3–113 (LQIEMEHHRG…DNEVNALTEL (111 aa)). Ser-58 is modified (phosphoserine).

This sequence belongs to the anti-sigma-factor antagonist family. Post-translationally, phosphorylated by SpoIIAB on a serine residue.

Functionally, in the phosphorylated form it could act as an anti-anti-sigma factor that counteracts SpoIIAB and thus releases sigma f from inhibition. The sequence is that of Anti-sigma F factor antagonist (spoIIAA) from Paenibacillus polymyxa (Bacillus polymyxa).